The following is a 2620-amino-acid chain: Ankyrin repeat and KH domain-containing protein mask-1 (2620 aa).

12 ANK repeats span residues 254-283 (SKIT…DPNV), 288-318 (NCNT…KKPD), 361-390 (ERDS…KNPP), 402-431 (ERYS…PADL), 437-466 (IEPS…KIEE), 470-502 (KKNT…EVDV), 507-536 (TGDT…DLTA), 538-566 (KTSP…TIPQ), 568-597 (QLSR…DLNF), 600-629 (DERT…SVNF), 634-663 (NDAT…DPML), and 667-697 (DGVN…NMPM). Disordered stretches follow at residues 699 to 726 (KDPP…SGQD), 994 to 1032 (HQEE…QPGA), and 1192 to 1229 (SLMA…AIDK). Over residues 1012–1029 (TSLTAPNPADTSDVTTKQ) the composition is skewed to polar residues. A compositionally biased stretch (low complexity) spans 1192-1206 (SLMAKSVQSQQQQGQ). Residues 1210–1221 (THSEGDGAERAK) show a composition bias toward basic and acidic residues. 10 ANK repeats span residues 1234–1263 (TLET…NIEH), 1267–1296 (KGFS…AIEA), 1301–1330 (TKDT…NKEH), 1334–1363 (SDYT…EINS), 1369–1398 (LGIS…DINA), 1403–1432 (NRNT…NVEH), 1436–1465 (TGLT…DTNA), 1471–1500 (TKDT…AVDV), 1504–1533 (KGCT…DPDM), and 1537–1566 (RKIS…QFPN). The stretch at 1596–1648 (AKKAQAESAELAAQKLLELIDEEKVQKEVKKQKQKDKKIKKKEEKKIKKQEAE) forms a coiled coil. Disordered stretches follow at residues 1621–1720 (QKEV…AEEP) and 1759–1804 (KEGK…EIDT). A compositionally biased stretch (basic and acidic residues) spans 1636-1647 (KKEEKKIKKQEA). The segment covering 1648-1661 (EPEPEPEPEPEPVP) has biased composition (acidic residues). Composition is skewed to low complexity over residues 1665 to 1681 (PVVI…IVVE) and 1769 to 1791 (KSGY…TTSS). A KH domain is found at 1807-1873 (ESSWKLTIPA…EMVRYAMNII (67 aa)). A compositionally biased stretch (polar residues) spans 1899 to 1913 (ASSFSSEGTSKSAVD). 8 disordered regions span residues 1899–1962 (ASSF…GNVW), 1976–2010 (LMET…QASE), 2067–2143 (SVQS…QTQN), 2267–2294 (NATS…VTTG), 2307–2343 (SFAP…QQQQ), 2372–2391 (QHQS…KFSM), 2429–2448 (QESS…NSYY), and 2496–2620 (QKKQ…SSNW). A compositionally biased stretch (low complexity) spans 1917–1946 (APSSIPKSLSSASIARQSASPIPQQSSQRS). Residues 1982–1993 (ISQSPKQAPQIP) are compositionally biased toward polar residues. Low complexity-rich tracts occupy residues 1994–2006 (STQQ…SRQD), 2067–2078 (SVQSVQHMQQQQ), and 2100–2118 (SQPI…SSFS). Polar residues-rich tracts occupy residues 2267 to 2286 (NATS…VQQP) and 2325 to 2339 (RSQS…STNI). Polar residues predominate over residues 2505–2528 (SFMHNSQQPQPFGAPSNASANQSR). The span at 2535–2547 (RPQPPPFVAPQAP) shows a compositional bias: pro residues. Residues 2552–2565 (SLGNASSTTNPSRT) are compositionally biased toward polar residues. 2 stretches are compositionally biased toward low complexity: residues 2566-2588 (SMQQ…QMPQ) and 2597-2620 (QQQQ…SSNW).

It belongs to the mask family.

It is found in the cytoplasm. In Caenorhabditis elegans, this protein is Ankyrin repeat and KH domain-containing protein mask-1.